We begin with the raw amino-acid sequence, 473 residues long: Photosystem II CP43 reaction center protein (473 aa).

A propeptide spanning residues 1 to 14 is cleaved from the precursor; sequence MKILYSPRRFYPVE. Residue Thr-15 is modified to N-acetylthreonine. Residue Thr-15 is modified to Phosphothreonine. Helical transmembrane passes span 69-93, 134-155, 178-200, 255-275, and 291-312; these read LFEVAHFVPEKPMYEQGLILLPHLA, IIGPETLEESFPFFGYAWKDKN, KALYFGGVYDTWAPGGGDVRKIT, KPFAWARRAFVWSGEAYLSYS, and WFNNTAYPSEFYGPTGPEASQA. Residue Glu-367 coordinates [CaMn4O5] cluster. Residues 447 to 471 traverse the membrane as a helical segment; the sequence is RARAAAAGFEKGIDRDFEPVLSTTP.

It belongs to the PsbB/PsbC family. PsbC subfamily. PSII is composed of 1 copy each of membrane proteins PsbA, PsbB, PsbC, PsbD, PsbE, PsbF, PsbH, PsbI, PsbJ, PsbK, PsbL, PsbM, PsbT, PsbX, PsbY, PsbZ, Psb30/Ycf12, at least 3 peripheral proteins of the oxygen-evolving complex and a large number of cofactors. It forms dimeric complexes. Binds multiple chlorophylls and provides some of the ligands for the Ca-4Mn-5O cluster of the oxygen-evolving complex. It may also provide a ligand for a Cl- that is required for oxygen evolution. PSII binds additional chlorophylls, carotenoids and specific lipids. is required as a cofactor.

It localises to the plastid. The protein localises to the chloroplast thylakoid membrane. Functionally, one of the components of the core complex of photosystem II (PSII). It binds chlorophyll and helps catalyze the primary light-induced photochemical processes of PSII. PSII is a light-driven water:plastoquinone oxidoreductase, using light energy to abstract electrons from H(2)O, generating O(2) and a proton gradient subsequently used for ATP formation. The polypeptide is Photosystem II CP43 reaction center protein (Huperzia lucidula (Shining clubmoss)).